A 554-amino-acid polypeptide reads, in one-letter code: Dihydroxy-acid dehydratase (554 aa).

Aspartate 78 lines the Mg(2+) pocket. Cysteine 119 is a [2Fe-2S] cluster binding site. Aspartate 120 and lysine 121 together coordinate Mg(2+). Lysine 121 is modified (N6-carboxylysine). Residue cysteine 191 coordinates [2Fe-2S] cluster. Glutamate 442 serves as a coordination point for Mg(2+). Serine 468 acts as the Proton acceptor in catalysis.

The protein belongs to the IlvD/Edd family. In terms of assembly, homodimer. Requires [2Fe-2S] cluster as cofactor. The cofactor is Mg(2+).

The enzyme catalyses (2R)-2,3-dihydroxy-3-methylbutanoate = 3-methyl-2-oxobutanoate + H2O. It catalyses the reaction (2R,3R)-2,3-dihydroxy-3-methylpentanoate = (S)-3-methyl-2-oxopentanoate + H2O. It participates in amino-acid biosynthesis; L-isoleucine biosynthesis; L-isoleucine from 2-oxobutanoate: step 3/4. It functions in the pathway amino-acid biosynthesis; L-valine biosynthesis; L-valine from pyruvate: step 3/4. Functions in the biosynthesis of branched-chain amino acids. Catalyzes the dehydration of (2R,3R)-2,3-dihydroxy-3-methylpentanoate (2,3-dihydroxy-3-methylvalerate) into 2-oxo-3-methylpentanoate (2-oxo-3-methylvalerate) and of (2R)-2,3-dihydroxy-3-methylbutanoate (2,3-dihydroxyisovalerate) into 2-oxo-3-methylbutanoate (2-oxoisovalerate), the penultimate precursor to L-isoleucine and L-valine, respectively. The polypeptide is Dihydroxy-acid dehydratase (Thermotoga sp. (strain RQ2)).